A 200-amino-acid chain; its full sequence is Large ribosomal subunit protein uL4 (200 aa).

The interval 42–65 is disordered; sequence TRAHKSRADVSGGGKKPFRQKGTG.

The protein belongs to the universal ribosomal protein uL4 family. In terms of assembly, part of the 50S ribosomal subunit.

Its function is as follows. One of the primary rRNA binding proteins, this protein initially binds near the 5'-end of the 23S rRNA. It is important during the early stages of 50S assembly. It makes multiple contacts with different domains of the 23S rRNA in the assembled 50S subunit and ribosome. In terms of biological role, forms part of the polypeptide exit tunnel. The chain is Large ribosomal subunit protein uL4 from Acinetobacter baumannii (strain AB307-0294).